Here is a 526-residue protein sequence, read N- to C-terminus: ATP synthase subunit alpha (526 aa).

An ATP-binding site is contributed by 171 to 178 (GDRQTGKT).

Belongs to the ATPase alpha/beta chains family. As to quaternary structure, F-type ATPases have 2 components, CF(1) - the catalytic core - and CF(0) - the membrane proton channel. CF(1) has five subunits: alpha(3), beta(3), gamma(1), delta(1), epsilon(1). CF(0) has three main subunits: a(1), b(2) and c(9-12). The alpha and beta chains form an alternating ring which encloses part of the gamma chain. CF(1) is attached to CF(0) by a central stalk formed by the gamma and epsilon chains, while a peripheral stalk is formed by the delta and b chains.

Its subcellular location is the cell membrane. The enzyme catalyses ATP + H2O + 4 H(+)(in) = ADP + phosphate + 5 H(+)(out). Functionally, produces ATP from ADP in the presence of a proton gradient across the membrane. The alpha chain is a regulatory subunit. In Christiangramia forsetii (strain DSM 17595 / CGMCC 1.15422 / KT0803) (Gramella forsetii), this protein is ATP synthase subunit alpha.